Here is a 138-residue protein sequence, read N- to C-terminus: uncharacterized protein (138 aa).

This is an uncharacterized protein from Saccharomyces cerevisiae (strain ATCC 204508 / S288c) (Baker's yeast).